Here is a 453-residue protein sequence, read N- to C-terminus: Lipase 9 (453 aa).

Positions 1–14 (MLYLILFLIAPIYA) are cleaved as a signal peptide. N-linked (GlcNAc...) asparagine glycosylation is present at Asn-36. An intrachain disulfide couples Cys-110 to Cys-281. Ser-194 serves as the catalytic Charge relay system. Residues Asn-229, Asn-266, and Asn-269 are each glycosylated (N-linked (GlcNAc...) asparagine). Active-site charge relay system residues include Asp-343 and His-376. Cys-359 and Cys-404 are oxidised to a cystine. The N-linked (GlcNAc...) asparagine glycan is linked to Asn-417.

Belongs to the AB hydrolase superfamily. Lipase family. Class Lip subfamily.

It localises to the secreted. The catalysed reaction is a triacylglycerol + H2O = a diacylglycerol + a fatty acid + H(+). Functionally, secreted lipase that is able to hydrolyze both the neutral triacylglycerols and the monopalmitate ester Tween 40, allowing the use of hydrolyzed products as carbon sources. Has broad lipolytic activity, which may be important for colonization and subsequent infection, therefore contributing to the persistence and virulence in human tissue. The polypeptide is Lipase 9 (Candida albicans (strain SC5314 / ATCC MYA-2876) (Yeast)).